Consider the following 550-residue polypeptide: Palmitoyltransferase PFA3 (550 aa).

Residues 1-21 (MASARRWARKAERCCCTFATY) are Cytoplasmic-facing. The helical transmembrane segment at 22–42 (FPLAFVYGLTSWAVWVVVNIG) threads the bilayer. Topologically, residues 43-56 (SVSTKSSWIGTGSS) are extracellular. A helical transmembrane segment spans residues 57–77 (IVGVALYVMLNWCYTTAVFTP). The Cytoplasmic segment spans residues 78–153 (PGSTTNDMGY…ATCIGLRNHK (76 aa)). Residues 110–160 (RFCKKCQARKPDRAHHCSTCRRCVLKMDHHCPWLATCIGLRNHKAFLLFLI) form the DHHC domain. Residues 154-174 (AFLLFLIYTSLFCFWSFAVSA) form a helical membrane-spanning segment. Residues 175-190 (CWVWYEALNDQEYIDS) are Extracellular-facing. The helical transmembrane segment at 191-211 (FLPVNFIMLSVISGIIGLVVG) threads the bilayer. At 212-550 (AFTSWHIHLA…TPKFQDEGVD (339 aa)) the chain is on the cytoplasmic side. Disordered stretches follow at residues 272–304 (ITRP…AQRE), 378–422 (REQQ…PKTM), and 434–550 (NLYA…EGVD). Residues 274-285 (RPEEGEERREMP) are compositionally biased toward basic and acidic residues. Positions 457–470 (DELADLDTDDEDGF) are enriched in acidic residues. A compositionally biased stretch (basic and acidic residues) spans 491-502 (DSHRRDDAEARA). The span at 523 to 542 (GSSQSTPTRTPSNLSRSGTP) shows a compositional bias: polar residues.

This sequence belongs to the DHHC palmitoyltransferase family. PFA3 subfamily. Post-translationally, autopalmitoylated.

It localises to the vacuole membrane. The enzyme catalyses L-cysteinyl-[protein] + hexadecanoyl-CoA = S-hexadecanoyl-L-cysteinyl-[protein] + CoA. In terms of biological role, palmitoyltransferase specific for VAC8. Palmitoylates VAC8 at one or more of its N-terminal cysteine residues, which is required for its proper membrane localization. This is Palmitoyltransferase PFA3 (PFA3) from Gibberella zeae (strain ATCC MYA-4620 / CBS 123657 / FGSC 9075 / NRRL 31084 / PH-1) (Wheat head blight fungus).